Reading from the N-terminus, the 565-residue chain is NAD-dependent malic enzyme (565 aa).

The Proton donor role is filled by Tyr104. Arg157 lines the NAD(+) pocket. Lys175 (proton acceptor) is an active-site residue. Residues Glu246, Asp247, and Asp270 each coordinate a divalent metal cation. NAD(+)-binding residues include Asp270 and Asn418.

This sequence belongs to the malic enzymes family. In terms of assembly, homotetramer. The cofactor is Mg(2+). Requires Mn(2+) as cofactor.

The enzyme catalyses (S)-malate + NAD(+) = pyruvate + CO2 + NADH. The catalysed reaction is oxaloacetate + H(+) = pyruvate + CO2. This is NAD-dependent malic enzyme from Salmonella choleraesuis (strain SC-B67).